A 309-amino-acid polypeptide reads, in one-letter code: Taste receptor type 2 member 8 (309 aa).

Residues 1 to 7 (MFSPADN) are Extracellular-facing. Residues 8-28 (IFIILITGEFILGILGNGYIA) traverse the membrane as a helical segment. Topologically, residues 29–50 (LVNWIDWIKKKKISTVDYILTN) are cytoplasmic. Residues 51-71 (LVIARICLISVMVVNGIVIVL) traverse the membrane as a helical segment. The Extracellular portion of the chain corresponds to 72 to 82 (NPDVYTKNKQQ). The chain crosses the membrane as a helical span at residues 83 to 103 (IVIFTFWTFANYLNMWITTCL). Residues 104 to 131 (NVFYFLKIASSSHPLFLWLKWKIDMVVH) are Cytoplasmic-facing. A helical transmembrane segment spans residues 132–152 (WILLGCFAISLLVSLIAAIVL). Over 153-184 (SCDYRFHAIAKHKRNITEMFHVSKIPYFEPLT) the chain is Extracellular. Asn-167 is a glycosylation site (N-linked (GlcNAc...) asparagine). Residues 185 to 205 (LFNLFAIVPFIVSLISFFLLV) form a helical membrane-spanning segment. Topologically, residues 206 to 239 (RSLWRHTKQIKLYATGSRDPSTEVHVRAIKTMTS) are cytoplasmic. The chain crosses the membrane as a helical span at residues 240-260 (FIFFFFLYYISSILMTFSYLM). The Extracellular portion of the chain corresponds to 261 to 266 (TKYKLA). A helical membrane pass occupies residues 267–287 (VEFGEIAAILYPLGHSLILIV). At 288 to 309 (LNNKLRQTFVRMLTCRKIACMI) the chain is on the cytoplasmic side.

It belongs to the G-protein coupled receptor T2R family. As to expression, expressed in subsets of taste receptor cells of the tongue and palate epithelium and exclusively in gustducin-positive cells.

Its subcellular location is the membrane. Functionally, receptor that may play a role in the perception of bitterness and is gustducin-linked. May play a role in sensing the chemical composition of the gastrointestinal content. The activity of this receptor may stimulate alpha gustducin, mediate PLC-beta-2 activation and lead to the gating of TRPM5. This is Taste receptor type 2 member 8 (TAS2R8) from Homo sapiens (Human).